We begin with the raw amino-acid sequence, 697 residues long: tRNA 5-methylaminomethyl-2-thiouridine biosynthesis bifunctional protein MnmC (697 aa).

The tract at residues 1 to 275 (MTAKPHKSCQ…KPATLAAIDH (275 aa)) is tRNA (mnm(5)s(2)U34)-methyltransferase. Residues 280–697 (VGGGLASANL…LRKLLKGKAL (418 aa)) are FAD-dependent cmnm(5)s(2)U34 oxidoreductase.

In the N-terminal section; belongs to the methyltransferase superfamily. tRNA (mnm(5)s(2)U34)-methyltransferase family. This sequence in the C-terminal section; belongs to the DAO family. FAD serves as cofactor.

It is found in the cytoplasm. The catalysed reaction is 5-aminomethyl-2-thiouridine(34) in tRNA + S-adenosyl-L-methionine = 5-methylaminomethyl-2-thiouridine(34) in tRNA + S-adenosyl-L-homocysteine + H(+). Catalyzes the last two steps in the biosynthesis of 5-methylaminomethyl-2-thiouridine (mnm(5)s(2)U) at the wobble position (U34) in tRNA. Catalyzes the FAD-dependent demodification of cmnm(5)s(2)U34 to nm(5)s(2)U34, followed by the transfer of a methyl group from S-adenosyl-L-methionine to nm(5)s(2)U34, to form mnm(5)s(2)U34. This chain is tRNA 5-methylaminomethyl-2-thiouridine biosynthesis bifunctional protein MnmC, found in Shewanella sp. (strain ANA-3).